The sequence spans 326 residues: Glyoxylate/hydroxypyruvate reductase B (326 aa).

Residues Arg-237 and Glu-266 contribute to the active site. Catalysis depends on His-285, which acts as the Proton donor.

Belongs to the D-isomer specific 2-hydroxyacid dehydrogenase family. GhrB subfamily. As to quaternary structure, homodimer.

The protein resides in the cytoplasm. It catalyses the reaction glycolate + NADP(+) = glyoxylate + NADPH + H(+). The catalysed reaction is (R)-glycerate + NAD(+) = 3-hydroxypyruvate + NADH + H(+). It carries out the reaction (R)-glycerate + NADP(+) = 3-hydroxypyruvate + NADPH + H(+). Functionally, catalyzes the NADPH-dependent reduction of glyoxylate and hydroxypyruvate into glycolate and glycerate, respectively. The protein is Glyoxylate/hydroxypyruvate reductase B of Yersinia pseudotuberculosis serotype O:3 (strain YPIII).